A 430-amino-acid chain; its full sequence is MTSVVVVGTQWGDEGKGKITDFLSANAEVIARYQGGDNAGHTIVIDGKKYKLHLIPSGIFFPEKISVIGNGMVVNPKSLVKELNYLHEEGVTTDNLRISDRAHVILPYHIELDRLQEEAKGDNKIGTTIKGIGPAYMDKAARVGIRIADLLDRDIFRERLERNLAEKNRLFEKLYDSTAIKIDDIFEEYYEYGQQIKQYVTDTSVILNNALDQGKRVLFEGAQGVMLDIDQGTYPFVTSSNPVAGGVTIGSGVGPSKIDKVVGVCKAYTSRVGDGPFPTELFDEVGDRIREVGHEYGTTTGRPRRVGWFDSVVMRHSRRVSGITNLSLNSIDVLSGLDTVKICVAYDLDGQRIDHYPASLEQLKRCKPIYEELPGWSEDITGVRKLEDLPENARNYVRRVSELVGVRISTFSVGPDRDQTNILESVWSSL.

Residues 12 to 18 (GDEGKGK) and 40 to 42 (GHT) contribute to the GTP site. Catalysis depends on aspartate 13, which acts as the Proton acceptor. Mg(2+)-binding residues include aspartate 13 and glycine 40. IMP-binding positions include 13-16 (DEGK), 38-41 (NAGH), threonine 128, arginine 142, glutamine 223, threonine 238, and arginine 302. The Proton donor role is filled by histidine 41. 298-304 (TTTGRPR) serves as a coordination point for substrate. Residues arginine 304, 330 to 332 (SID), and 412 to 414 (SVG) each bind GTP.

This sequence belongs to the adenylosuccinate synthetase family. As to quaternary structure, homodimer. Mg(2+) serves as cofactor.

It is found in the cytoplasm. It carries out the reaction IMP + L-aspartate + GTP = N(6)-(1,2-dicarboxyethyl)-AMP + GDP + phosphate + 2 H(+). It participates in purine metabolism; AMP biosynthesis via de novo pathway; AMP from IMP: step 1/2. Functionally, plays an important role in the de novo pathway of purine nucleotide biosynthesis. Catalyzes the first committed step in the biosynthesis of AMP from IMP. The chain is Adenylosuccinate synthetase from Streptococcus gordonii (strain Challis / ATCC 35105 / BCRC 15272 / CH1 / DL1 / V288).